The primary structure comprises 119 residues: Large ribosomal subunit protein bL17 (119 aa).

It belongs to the bacterial ribosomal protein bL17 family. In terms of assembly, part of the 50S ribosomal subunit. Contacts protein L32.

The protein is Large ribosomal subunit protein bL17 of Psychrobacter arcticus (strain DSM 17307 / VKM B-2377 / 273-4).